A 646-amino-acid polypeptide reads, in one-letter code: Envelope glycoprotein (646 aa).

Residues 1–25 form the signal peptide; the sequence is MLSVAQSSALFLLQAICILYITKLT. The Lumenal portion of the chain corresponds to 26–119; the sequence is IPTPVSEINL…INYLLRFISA (94 aa). Residues Asn-72, Asn-80, and Asn-101 are each glycosylated (N-linked (GlcNAc...) asparagine; by host). A helical transmembrane segment spans residues 120-140; sequence IIVYLLLSISKQGIFLFFSIV. Topologically, residues 141-176 are cytoplasmic; it reads HYSFKFIKNKKSCNICGNDFYFIHIDCPKPDFTKRS. Residues 177-197 form a helical membrane-spanning segment; that stretch reads DFHMMFYIILFLSLFFVVTHA. The Lumenal segment spans residues 198–588; that stretch reads DDNVYNYYEH…KNLLYIDYKK (391 aa). N-linked (GlcNAc...) asparagine; by host glycosylation is found at Asn-247 and Asn-336. The chain crosses the membrane as a helical span at residues 589 to 609; it reads IIFVFLVAIISIGIFLRSPYM. At 610–646 the chain is on the cytoplasmic side; sequence LLSSILKFRKRRKVVATNRSEQLVMDDDVDVFIGPPS.

In terms of assembly, G2 and G1 interact with each other. Specific enzymatic cleavages in vivo yield mature proteins including glycoprotein G1 and glycoprotein G2. Post-translationally, glycosylated. Glycosylation is essential for proper subcellular location.

It localises to the virion membrane. It is found in the host Golgi apparatus membrane. Glycoprotein G2 and glycoprotein G1 interact with each other and are present at the surface of the virion. They are able to attach the virion to a cell receptor and to promote fusion of membranes after endocytosis of the virion. The protein is Envelope glycoprotein of European mountain ash ringspot-associated virus (isolate Sorbus aucuparia) (EMARAV).